The sequence spans 424 residues: 5,5'-dehydrodivanillate O-demethylase oxygenase subunit (424 aa).

Residues 27-135 (WHPIGGESEF…VRALGGLLWA (109 aa)) enclose the Rieske domain. [2Fe-2S] cluster contacts are provided by C68, H70, C87, and H90. H181, H186, and D306 together coordinate Fe cation.

This sequence belongs to the bacterial ring-hydroxylating dioxygenase alpha subunit family. As to quaternary structure, homotrimer. The three-component monooxygenase is composed of an oxygenase (LigXa), a ferredoxin (LigXc) and a ferredoxin reductase (LigXd). The cofactor is [2Fe-2S] cluster. Requires Fe cation as cofactor.

It carries out the reaction 5,5'-dehydrodivanillate + NADH + O2 + H(+) = 2,2',3-trihydroxy-3'-methoxy-5,5'-dicarboxybiphenyl + formaldehyde + NAD(+) + H2O. Involved in the catabolism of 5,5'-dehydrodivanillate (DDVA), an intermediate in the biodegradation of lignin. Part of a three-component monooxygenase that catalyzes the O-demethylation of DDVA, leading to the formation of 2,2',3-trihydroxy-3'-methoxy-5,5'-dicarboxybiphenyl (OH-DDVA). This is 5,5'-dehydrodivanillate O-demethylase oxygenase subunit from Sphingobium sp. (strain NBRC 103272 / SYK-6).